Consider the following 607-residue polypeptide: Glutamine--fructose-6-phosphate aminotransferase [isomerizing] (607 aa).

Cys-2 acts as the Nucleophile; for GATase activity in catalysis. The region spanning 2–217 is the Glutamine amidotransferase type-2 domain; it reads CGIIGIIGRE…EGDWVVLTRE (216 aa). SIS domains follow at residues 283 to 422 and 455 to 597; these read PDFD…VKGQ and VATA…VDQP. Catalysis depends on Lys-602, which acts as the For Fru-6P isomerization activity.

Homodimer.

The protein resides in the cytoplasm. The enzyme catalyses D-fructose 6-phosphate + L-glutamine = D-glucosamine 6-phosphate + L-glutamate. Functionally, catalyzes the first step in hexosamine metabolism, converting fructose-6P into glucosamine-6P using glutamine as a nitrogen source. This Zymomonas mobilis subsp. mobilis (strain ATCC 31821 / ZM4 / CP4) protein is Glutamine--fructose-6-phosphate aminotransferase [isomerizing].